Reading from the N-terminus, the 743-residue chain is Catalase-peroxidase (743 aa).

Residues 1 to 21 (MSENHETVVSELNEESGGGCP) are disordered. Positions 108 to 231 (WHSAGTYRIS…LGAVQMGLIY (124 aa)) form a cross-link, tryptophyl-tyrosyl-methioninium (Trp-Tyr) (with M-257). The active-site Proton acceptor is H109. The segment at residues 231 to 257 (YVNPEGPNGTPDPLAAARDIRETFRRM) is a cross-link (tryptophyl-tyrosyl-methioninium (Tyr-Met) (with W-108)). Residue H272 coordinates heme b. The segment at 275-296 (GKTHGAGDPDNVGPEPEGAPLE) is disordered.

The protein belongs to the peroxidase family. Peroxidase/catalase subfamily. Homodimer or homotetramer. The cofactor is heme b. Formation of the three residue Trp-Tyr-Met cross-link is important for the catalase, but not the peroxidase activity of the enzyme.

The enzyme catalyses H2O2 + AH2 = A + 2 H2O. It catalyses the reaction 2 H2O2 = O2 + 2 H2O. Functionally, bifunctional enzyme with both catalase and broad-spectrum peroxidase activity. This is Catalase-peroxidase from Parafrankia sp. (strain EAN1pec).